A 94-amino-acid polypeptide reads, in one-letter code: DASH complex subunit DAD5 (94 aa).

The segment covering 1–20 (MRRSTIVPTSRTSSSSPSPS) has biased composition (low complexity). The disordered stretch occupies residues 1 to 25 (MRRSTIVPTSRTSSSSPSPSQMKSF).

Belongs to the DASH complex HSK3 family. Component of the DASH complex consisting of ask1, dad1, dad2, dad3, dad4, dam1, duo1, dad5, spc19 and spc34, with a stoichiometry of one copy of each subunit per complex. Multiple DASH complexes oligomerize to form a ring that encircles spindle microtubules and organizes the rod-like NDC80 complexes of the outer kinetochore. DASH complex oligomerization strengthens microtubule attachments. On cytoplasmic microtubules, DASH complexes appear to form patches instead of rings.

It is found in the nucleus. The protein localises to the cytoplasm. The protein resides in the cytoskeleton. It localises to the spindle. Its subcellular location is the chromosome. It is found in the centromere. The protein localises to the kinetochore. Its function is as follows. Component of the DASH complex that connects microtubules with kinetochores and couples microtubule depolymerisation to chromosome movement; it is involved in retrieving kinetochores to the spindle poles before their re-orientation on the spindle in early mitosis and allows microtubule depolymerization to pull chromosomes apart and resist detachment during anaphase. Kinetochores, consisting of a centromere-associated inner segment and a microtubule-contacting outer segment, play a crucial role in chromosome segregation by mediating the physical connection between centromeric DNA and microtubules. Kinetochores also serve as an input point for the spindle assembly checkpoint, which delays anaphase until all chromosomes have bioriented on the mitotic spindle. The DASH complex mediates bipolar kinetochore-microtubule attachments and facilitates the formation of additional interactions between outer kinetochore components and spindle microtubules. During chromosome movement along the microtubule, it is required both for the sliding of kinetochores along the lateral side of the microtubule and also for microtubule end-on pulling on the kinetochore. Modulates cytoplasmic microtubule dynamics by tracking the plus-end of shortening microtubules and slowing their depolymerization. This is DASH complex subunit DAD5 from Schizosaccharomyces pombe (strain 972 / ATCC 24843) (Fission yeast).